Here is a 424-residue protein sequence, read N- to C-terminus: Histidinol dehydrogenase (424 aa).

NAD(+) contacts are provided by tyrosine 127, glutamine 188, and asparagine 211. Serine 234, glutamine 256, and histidine 259 together coordinate substrate. Positions 256 and 259 each coordinate Zn(2+). Catalysis depends on proton acceptor residues glutamate 322 and histidine 323. The substrate site is built by histidine 323, aspartate 356, glutamate 410, and histidine 415. Aspartate 356 is a binding site for Zn(2+). Residue histidine 415 participates in Zn(2+) binding.

The protein belongs to the histidinol dehydrogenase family. Zn(2+) is required as a cofactor.

It carries out the reaction L-histidinol + 2 NAD(+) + H2O = L-histidine + 2 NADH + 3 H(+). The protein operates within amino-acid biosynthesis; L-histidine biosynthesis; L-histidine from 5-phospho-alpha-D-ribose 1-diphosphate: step 9/9. Functionally, catalyzes the sequential NAD-dependent oxidations of L-histidinol to L-histidinaldehyde and then to L-histidine. This Methanococcus maripaludis (strain DSM 14266 / JCM 13030 / NBRC 101832 / S2 / LL) protein is Histidinol dehydrogenase.